Here is a 318-residue protein sequence, read N- to C-terminus: Glycine--tRNA ligase alpha subunit (318 aa).

This sequence belongs to the class-II aminoacyl-tRNA synthetase family. In terms of assembly, tetramer of two alpha and two beta subunits.

The protein resides in the cytoplasm. The enzyme catalyses tRNA(Gly) + glycine + ATP = glycyl-tRNA(Gly) + AMP + diphosphate. The sequence is that of Glycine--tRNA ligase alpha subunit from Chelativorans sp. (strain BNC1).